The sequence spans 166 residues: Phosphopantetheine adenylyltransferase (166 aa).

Ser9 contributes to the substrate binding site. ATP is bound by residues 9–10 and His17; that span reads SY. Residues Lys41, Ile75, and Lys89 each coordinate substrate. ATP-binding positions include 90–92, Glu100, and 124–130; these read GLR and LEHISSS.

The protein belongs to the bacterial CoaD family. As to quaternary structure, homohexamer. Requires Mg(2+) as cofactor.

Its subcellular location is the cytoplasm. The catalysed reaction is (R)-4'-phosphopantetheine + ATP + H(+) = 3'-dephospho-CoA + diphosphate. The protein operates within cofactor biosynthesis; coenzyme A biosynthesis; CoA from (R)-pantothenate: step 4/5. Functionally, reversibly transfers an adenylyl group from ATP to 4'-phosphopantetheine, yielding dephospho-CoA (dPCoA) and pyrophosphate. The protein is Phosphopantetheine adenylyltransferase of Bifidobacterium longum (strain DJO10A).